The sequence spans 785 residues: Probable ATP-dependent RNA helicase ddx17 (785 aa).

Composition is skewed to low complexity over residues 1-11 (MSYNSSNSGSG), 18-37 (SGNSSYSSTSRGGSSYGNRS), 49-95 (SYNR…YGPS), and 105-177 (GSSS…NGYS). The tract at residues 1–233 (MSYNSSNSGS…TPSTSYNGGS (233 aa)) is disordered. The segment covering 178–191 (KPTSNYSYSNGYTG) has biased composition (polar residues). Over residues 192-233 (PTTNYSSYSNGYSTPPTSTSTSSSSTTTTTTTTPSTSYNGGS) the composition is skewed to low complexity. A Q motif motif is present at residues 384–412 (MQFTQAPFPGYLMKEIIGAGFPNPTPIQS). The Helicase ATP-binding domain occupies 415-590 (WPIALKGRDI…HDFLTDHIQV (176 aa)). 428 to 435 (AKTGSGKT) contacts ATP. Residues 538–541 (DEAD) carry the DEAD box motif. A Helicase C-terminal domain is found at 602–763 (NVRQIVEVCQ…KIPIELSNLS (162 aa)). Over residues 764-774 (VTPSTSSNTKK) the composition is skewed to polar residues. The interval 764-785 (VTPSTSSNTKKFSPYPTYSKRY) is disordered.

The protein belongs to the DEAD box helicase family. DDX5/DBP2 subfamily.

Its subcellular location is the cytoplasm. It is found in the nucleus. It carries out the reaction ATP + H2O = ADP + phosphate + H(+). Functionally, probable ATP-dependent RNA helicase which may be involved nonsense-mediated mRNA decay and ribosome biogenesis through rRNA processing. In Dictyostelium discoideum (Social amoeba), this protein is Probable ATP-dependent RNA helicase ddx17 (ddx17).